The following is a 251-amino-acid chain: Gamma-glutamyl peptidase 4 (251 aa).

Positions 16–213 (SEFAKKTYGG…IDRVLAGGHI (198 aa)) constitute a Glutamine amidotransferase type-1 domain. C100 serves as the catalytic Nucleophile. Residues H192 and E194 contribute to the active site.

Belongs to the peptidase C26 family.

The protein localises to the cytoplasm. Its subcellular location is the cytosol. The protein operates within secondary metabolite biosynthesis. Involved in glucosinolate biosynthesis. Hydrolyzes the gamma-glutamyl peptide bond of several glutathione (GSH) conjugates to produce Cys-Gly conjugates related to glucosinolates. The gamma-Glu-Cys-Gly-GSH conjugates are the sulfur-donating molecule in glucosinolate biosynthesis. In Arabidopsis thaliana (Mouse-ear cress), this protein is Gamma-glutamyl peptidase 4.